A 31-amino-acid polypeptide reads, in one-letter code: LysM-domain containing protein (31 aa).

A LysM 1 repeat occupies 1 to 28 (YSPSLTDLQSYNAMNGPALKAGDILAVP).

This is LysM-domain containing protein from Jatropha curcas (Barbados nut).